A 398-amino-acid polypeptide reads, in one-letter code: GTP cyclohydrolase-2 (398 aa).

The segment at 1–172 (MNTPTHTHPH…TAAAGASTTE (172 aa)) is unknown. The GTP cyclohydrolase II stretch occupies residues 173-398 (YELVTRTPVP…VKSIPKTGHA (226 aa)). Position 220-224 (220-224 (RVHSS)) interacts with GTP. Cysteine 225, cysteine 236, and cysteine 238 together coordinate Zn(2+). GTP contacts are provided by residues glutamine 241, 263–265 (EGR), and threonine 285. Aspartate 297 (proton acceptor) is an active-site residue. The Nucleophile role is filled by arginine 299. Residues serine 320 and lysine 325 each coordinate GTP. Residues 375-398 (QRPQDPSETVDGETVKSIPKTGHA) form a disordered region.

It in the C-terminal section; belongs to the GTP cyclohydrolase II family. The cofactor is Zn(2+).

The catalysed reaction is GTP + 4 H2O = 2,5-diamino-6-hydroxy-4-(5-phosphoribosylamino)-pyrimidine + formate + 2 phosphate + 3 H(+). The protein operates within cofactor biosynthesis; riboflavin biosynthesis; 5-amino-6-(D-ribitylamino)uracil from GTP: step 1/4. Catalyzes the conversion of GTP to 2,5-diamino-6-ribosylamino-4(3H)-pyrimidinone 5'-phosphate (DARP), formate and pyrophosphate. The chain is GTP cyclohydrolase-2 (ribA) from Xylella fastidiosa (strain 9a5c).